A 574-amino-acid polypeptide reads, in one-letter code: Glycine--tRNA ligase (574 aa).

2 residues coordinate substrate: arginine 96 and glutamate 162. ATP contacts are provided by residues 194–196, 204–209, 327–328, and 450–453; these read RNE, IRLREF, EC, and GIDR. 209 to 213 contacts substrate; sequence FTQAE. 446-450 contacts substrate; that stretch reads EPSYG.

The protein belongs to the class-II aminoacyl-tRNA synthetase family.

Its subcellular location is the cytoplasm. It carries out the reaction tRNA(Gly) + glycine + ATP = glycyl-tRNA(Gly) + AMP + diphosphate. In terms of biological role, catalyzes the attachment of glycine to tRNA(Gly). In Methanococcus maripaludis (strain DSM 14266 / JCM 13030 / NBRC 101832 / S2 / LL), this protein is Glycine--tRNA ligase.